The primary structure comprises 289 residues: Formamidopyrimidine-DNA glycosylase (289 aa).

The active-site Schiff-base intermediate with DNA is P2. E3 serves as the catalytic Proton donor. Residue K61 is the Proton donor; for beta-elimination activity of the active site. DNA contacts are provided by H96, R115, and K161. The FPG-type zinc-finger motif lies at 247 to 281; it reads SAYGQENLPCPRCGAPIKREKFMNRSSFSCPRCQP. R271 serves as the catalytic Proton donor; for delta-elimination activity.

Belongs to the FPG family. In terms of assembly, monomer. The cofactor is Zn(2+).

It carries out the reaction Hydrolysis of DNA containing ring-opened 7-methylguanine residues, releasing 2,6-diamino-4-hydroxy-5-(N-methyl)formamidopyrimidine.. The catalysed reaction is 2'-deoxyribonucleotide-(2'-deoxyribose 5'-phosphate)-2'-deoxyribonucleotide-DNA = a 3'-end 2'-deoxyribonucleotide-(2,3-dehydro-2,3-deoxyribose 5'-phosphate)-DNA + a 5'-end 5'-phospho-2'-deoxyribonucleoside-DNA + H(+). Its function is as follows. Involved in base excision repair of DNA damaged by oxidation or by mutagenic agents. Acts as a DNA glycosylase that recognizes and removes damaged bases. Has a preference for oxidized purines, such as 7,8-dihydro-8-oxoguanine (8-oxoG). Has AP (apurinic/apyrimidinic) lyase activity and introduces nicks in the DNA strand. Cleaves the DNA backbone by beta-delta elimination to generate a single-strand break at the site of the removed base with both 3'- and 5'-phosphates. In Rhodococcus erythropolis (strain PR4 / NBRC 100887), this protein is Formamidopyrimidine-DNA glycosylase.